We begin with the raw amino-acid sequence, 146 residues long: Holo-[acyl-carrier-protein] synthase (146 aa).

Mg(2+)-binding residues include Asp-9 and Glu-63.

The protein belongs to the P-Pant transferase superfamily. AcpS family. Mg(2+) serves as cofactor.

It is found in the cytoplasm. It catalyses the reaction apo-[ACP] + CoA = holo-[ACP] + adenosine 3',5'-bisphosphate + H(+). Its function is as follows. Transfers the 4'-phosphopantetheine moiety from coenzyme A to a Ser of acyl-carrier-protein. In Burkholderia ambifaria (strain MC40-6), this protein is Holo-[acyl-carrier-protein] synthase.